Consider the following 79-residue polypeptide: MDGQFEQKKKQKDETYDIEHLIACFSPMIRKKLSNTSYQEREDLEQELKIKMFEKADMLLCQDVPGFWEFILYMVDENS.

In terms of biological role, together with RNA polymerase sigma factor SigO, positively regulates the expression of at least three operons, including oxdC-yvrL, sigO-rsoA and yvrJ. Required for the acid stress-dependent induction of the oxalate decarboxylase oxdC. This is Sigma-O factor regulatory protein RsoA (rsoA) from Bacillus subtilis (strain 168).